Consider the following 2492-residue polypeptide: Transcriptional regulator ATRX (2492 aa).

The segment at 1–147 (MTAEPMSESK…KDDFKGPEFR (147 aa)) is disordered. K10 is covalently cross-linked (Glycyl lysine isopeptide (Lys-Gly) (interchain with G-Cter in SUMO2)). Positions 17–27 (KLHDFLAHSSE) are enriched in basic and acidic residues. Phosphoserine is present on residues S25 and S34. The segment covering 40 to 57 (MNQNTDKISGSGSNSDMM) has biased composition (polar residues). The segment covering 58 to 72 (ENSKEEGTSSSEKSK) has biased composition (basic and acidic residues). Residue Y89 is modified to Phosphotyrosine. S92 and S112 each carry phosphoserine. The span at 92–108 (SDDEKPLDDETVNEDAS) shows a compositional bias: acidic residues. The span at 135–147 (NEDKDDFKGPEFR) shows a compositional bias: basic and acidic residues. Glycyl lysine isopeptide (Lys-Gly) (interchain with G-Cter in SUMO2) cross-links involve residues K138 and K142. The region spanning 159–296 (KRGEDGLHGI…LEQLLQQNKK (138 aa)) is the ADD domain. Residues 170-206 (SCTACGQQVNHFQKDSIYRHPSLQVLICKNCFKYYMS) form a GATA-type; atypical zinc finger. The residue at position 213 (S213) is a Phosphoserine. A PHD-type; atypical zinc finger spans residues 217-272 (DEQCRWCAEGGNLICCDFCHNAFCKKCILRNLGRKELSTIMDENNQWYCYICHPEP). A Glycyl lysine isopeptide (Lys-Gly) (interchain with G-Cter in SUMO2) cross-link involves residue K299. S316 is subject to Phosphoserine. K438 participates in a covalent cross-link: Glycyl lysine isopeptide (Lys-Gly) (interchain with G-Cter in SUMO2). The segment covering 445–502 (KGEKPCALEKKDISKSEAKLSRKQVDSEHMHQNVPTEEQRTNKSTGGEHKKSDRKEEP) has biased composition (basic and acidic residues). 2 disordered regions span residues 445 to 516 (KGEK…LDMD) and 535 to 576 (AMEV…GIKS). A compositionally biased stretch (polar residues) spans 550-567 (SGTEQEVESSSVKLNISS). The PxVxL motif signature appears at 581 to 594 (KVTKELYVKLTPVS). T591 is modified (phosphothreonine). Residues 593–616 (VSLSNSPIKGADCQEVPQDKDGYK) are disordered. A phosphoserine mark is found at S594 and S598. A Glycyl lysine isopeptide (Lys-Gly) (interchain with G-Cter in SUMO1); alternate cross-link involves residue K623. K623 is covalently cross-linked (Glycyl lysine isopeptide (Lys-Gly) (interchain with G-Cter in SUMO2); alternate). S634 bears the Phosphoserine mark. The interval 649–956 (EESDLRRSPR…KHLKTKTCKK (308 aa)) is disordered. T674 bears the Phosphothreonine mark. Residues S675, S677, S729, and S731 each carry the phosphoserine modification. The span at 755 to 777 (NEIHTNHKTLYDLKTQAGKDDKG) shows a compositional bias: basic and acidic residues. S784, S819, S849, S850, S875, and S876 each carry phosphoserine. Over residues 843–864 (NTKDFDSSEDEKHSKKGMDNQG) the composition is skewed to basic and acidic residues. The segment covering 878 to 887 (DAERKQERET) has biased composition (basic and acidic residues). A Phosphoserine modification is found at S889. 2 stretches are compositionally biased toward basic and acidic residues: residues 894 to 909 (TVDK…DRLP) and 920 to 944 (GVDK…ETKE). A compositionally biased stretch (basic residues) spans 945-955 (KSKHLKTKTCK). S962 carries the post-translational modification Phosphoserine. K967 is subject to N6-acetyllysine. Basic and acidic residues predominate over residues 968-1004 (FLKKDQSDETSEDDKKQSKKGTEEKKKPSDFKKKVIK). Residues 968–1479 (FLKKDQSDET…SKSPGKGRKK (512 aa)) are disordered. Phosphoserine is present on S974. A Phosphothreonine modification is found at T977. Residue K1004 forms a Glycyl lysine isopeptide (Lys-Gly) (interchain with G-Cter in SUMO2) linkage. A phosphoserine mark is found at S1011, S1012, and S1013. The span at 1015-1027 (GTEKLPEREEICH) shows a compositional bias: basic and acidic residues. Basic residues predominate over residues 1045–1055 (KSKKIRDKTSK). Basic and acidic residues predominate over residues 1056 to 1082 (KKDELSDYAEKSTGKGDSCDSSEDKKS). Position 1061 is a phosphoserine (S1061). A Phosphotyrosine modification is found at Y1063. Residues 1090–1102 (EKKRCKLLGKSSR) are compositionally biased toward basic residues. Residues 1103–1139 (KRQDCSSSDTEKYSMKEDGCNSSDKRLKRIELRERRN) are compositionally biased toward basic and acidic residues. Positions 1167–1195 (KKKQRTSSKKKAVIVKEKKRNSLRTSTKR) are enriched in basic residues. The interval 1189-1326 (LRTSTKRKQA…KNQVNSESDS (138 aa)) is interaction with DAXX. Residues 1233–1246 (LVLSSHTGFCQSSG) are compositionally biased toward polar residues. 3 positions are modified to phosphoserine: S1244, S1245, and S1253. A compositionally biased stretch (basic and acidic residues) spans 1267-1281 (PENRIAKKMLLEEIK). The segment covering 1286-1297 (SDEDGSSDDEPE) has biased composition (acidic residues). Residues 1298-1308 (EGKKRTGKQNE) show a composition bias toward basic and acidic residues. A phosphoserine mark is found at S1322, S1324, and S1326. The span at 1334 to 1345 (PRYRHRLLRHKL) shows a compositional bias: basic residues. 2 positions are modified to phosphoserine: S1348 and S1352. Basic and acidic residues-rich tracts occupy residues 1353-1368 (GEEK…EVKG) and 1408-1417 (KKAELEENQR). The segment covering 1419–1428 (YKQKKKRRRI) has biased composition (basic residues). Over residues 1443 to 1468 (EEEEEEKEEEEEEEEEEEEEEEDEND) the composition is skewed to acidic residues. K1488 is covalently cross-linked (Glycyl lysine isopeptide (Lys-Gly) (interchain with G-Cter in SUMO2)). S1527 carries the post-translational modification Phosphoserine. Residue T1529 is modified to Phosphothreonine. Positions 1581 to 1768 (KTKKSPGSGC…HCMVNFIKEN (188 aa)) constitute a Helicase ATP-binding domain. An ATP-binding site is contributed by 1594–1601 (HCMGLGKT). The DEGH box signature appears at 1719–1722 (DEGH). Phosphoserine is present on residues S1906 and S1913. The tract at residues 1913 to 2000 (SDSDETSMSL…SSNPSSPAPD (88 aa)) is disordered. Basic residues predominate over residues 1929-1938 (KKKKKGKKGK). Residue K1982 forms a Glycyl lysine isopeptide (Lys-Gly) (interchain with G-Cter in SUMO1); alternate linkage. K1982 participates in a covalent cross-link: Glycyl lysine isopeptide (Lys-Gly) (interchain with G-Cter in SUMO2); alternate. Residue K1987 forms a Glycyl lysine isopeptide (Lys-Gly) (interchain with G-Cter in SUMO2) linkage. A compositionally biased stretch (low complexity) spans 1990 to 1999 (SSSNPSSPAP). Phosphoserine is present on residues S1992 and S1996. Residues 2010–2280 (DAEVLEHSGK…RKAAWAEYEA (271 aa)) form an interaction with MECP2 region. The Helicase C-terminal domain occupies 2025–2205 (EILRMAEEIG…ERHFTMNELT (181 aa)). The residue at position 2220 (S2220) is a Phosphoserine. The segment at 2462 to 2492 (PVAGGMQPPPLQRAPPPMRSKNPGPSQGKSM) is disordered. Residues 2468–2479 (QPPPLQRAPPPM) are compositionally biased toward pro residues. 2 positions are modified to omega-N-methylarginine: R2474 and R2480.

Belongs to the SNF2/RAD54 helicase family. As to quaternary structure, interacts with DAXX to form the chromatin remodeling complex ATRX:DAXX. Probably binds EZH2. Binds annexin V in a calcium and phosphatidylcholine/phosphatidylserine-dependent manner. Interacts directly with CBX5 via the PxVxL motif. Interacts with RAD50, MRE11 and NBN; indicative for an association with the MRN complex. Interacts with histone MACROH2A1. Interacts with histone H3 peptides methylated at 'Lys-10' with preferences H3K9me3 &gt; H3K9me2 &gt; H3K9me1. Interacts with histone H3 peptides unmethylated at 'Lys-5' (H3K4me0). Interacts with MECP2, SMC1 and SMC3. Interacts with SETDB1, TRIM28 and ZNF274. Post-translationally, phosphorylated at serine residues during mitose. Phosphorylation may promote the release from the nuclear matrix and progression to mitosis. Ubiquitous.

Its subcellular location is the nucleus. The protein resides in the chromosome. It is found in the telomere. It localises to the PML body. It catalyses the reaction ATP + H2O = ADP + phosphate + H(+). Involved in transcriptional regulation and chromatin remodeling. Facilitates DNA replication in multiple cellular environments and is required for efficient replication of a subset of genomic loci. Binds to DNA tandem repeat sequences in both telomeres and euchromatin and in vitro binds DNA quadruplex structures. May help stabilizing G-rich regions into regular chromatin structures by remodeling G4 DNA and incorporating H3.3-containing nucleosomes. Catalytic component of the chromatin remodeling complex ATRX:DAXX which has ATP-dependent DNA translocase activity and catalyzes the replication-independent deposition of histone H3.3 in pericentric DNA repeats outside S-phase and telomeres, and the in vitro remodeling of H3.3-containing nucleosomes. Its heterochromatin targeting is proposed to involve a combinatorial readout of histone H3 modifications (specifically methylation states of H3K9 and H3K4) and association with CBX5. Involved in maintaining telomere structural integrity in embryonic stem cells which probably implies recruitment of CBX5 to telomeres. Reports on the involvement in transcriptional regulation of telomeric repeat-containing RNA (TERRA) are conflicting; according to a report, it is not sufficient to decrease chromatin condensation at telomeres nor to increase expression of telomeric RNA in fibroblasts. May be involved in telomere maintenance via recombination in ALT (alternative lengthening of telomeres) cell lines. Acts as a negative regulator of chromatin incorporation of transcriptionally repressive histone MACROH2A1, particularily at telomeres and the alpha-globin cluster in erythroleukemic cells. Participates in the allele-specific gene expression at the imprinted IGF2/H19 gene locus. On the maternal allele, required for the chromatin occupancy of SMC1 and CTCTF within the H19 imprinting control region (ICR) and involved in esatblishment of histone tails modifications in the ICR. May be involved in brain development and facial morphogenesis. Binds to zinc-finger coding genes with atypical chromatin signatures and regulates its H3K9me3 levels. Forms a complex with ZNF274, TRIM28 and SETDB1 to facilitate the deposition and maintenance of H3K9me3 at the 3' exons of zinc-finger genes. This chain is Transcriptional regulator ATRX (ATRX), found in Homo sapiens (Human).